The primary structure comprises 382 residues: Polyadenylate-binding protein 5 (382 aa).

RRM domains follow at residues 18-96 (AALY…WSQP), 106-182 (GNIF…RFKF), 199-276 (TNVF…RAQK), and 302-378 (VPIY…LGQA).

It localises to the cytoplasm. In terms of biological role, binds the poly(A) tail of mRNA. May be involved in cytoplasmic regulatory processes of mRNA metabolism. Can probably bind to cytoplasmic RNA sequences other than poly(A) in vivo. This chain is Polyadenylate-binding protein 5 (PABPC5), found in Macaca mulatta (Rhesus macaque).